The chain runs to 377 residues: Guanine nucleotide-binding protein subunit beta (377 aa).

7 WD repeats span residues 63–93, 105–135, 154–185, 202–233, 246–276, 293–323, and 339–369; these read GHTGKVYSLDWTPEKNRIVSASQDGRLIVWN, LPCAWVMTCAFSPSGQSVACGGLDSACSIFN, GHKGYVSSCQYVPDEDTHLITSSGDQTCVLWD, GHTADVLSVSISSSNPKLFVSGSCDTTARLWD, GHESDVNTVKFFPDGNRFGTGSDDGSCRLFD, GDIPHVTSMAFSISGRLLFVGYSNGDCYVWD, and SHEGRISCLGLSADGSALCTGSWDTNLKIWA.

The protein belongs to the WD repeat G protein beta family. In terms of assembly, g proteins are composed of 3 units, alpha, beta and gamma.

Guanine nucleotide-binding proteins (G proteins) are involved as a modulator or transducer in various transmembrane signaling systems. The beta and gamma chains are required for the GTPase activity, for replacement of GDP by GTP, and for G protein-effector interaction. In Solanum tuberosum (Potato), this protein is Guanine nucleotide-binding protein subunit beta (GB1).